A 529-amino-acid chain; its full sequence is Bifunctional purine biosynthesis protein PurH (529 aa).

In terms of domain architecture, MGS-like spans 1–148 (MQQRRPVRRA…KNHKDVAIVV (148 aa)). K287 bears the N6-acetyllysine mark.

Belongs to the PurH family.

The catalysed reaction is (6R)-10-formyltetrahydrofolate + 5-amino-1-(5-phospho-beta-D-ribosyl)imidazole-4-carboxamide = 5-formamido-1-(5-phospho-D-ribosyl)imidazole-4-carboxamide + (6S)-5,6,7,8-tetrahydrofolate. It carries out the reaction IMP + H2O = 5-formamido-1-(5-phospho-D-ribosyl)imidazole-4-carboxamide. Its pathway is purine metabolism; IMP biosynthesis via de novo pathway; 5-formamido-1-(5-phospho-D-ribosyl)imidazole-4-carboxamide from 5-amino-1-(5-phospho-D-ribosyl)imidazole-4-carboxamide (10-formyl THF route): step 1/1. It functions in the pathway purine metabolism; IMP biosynthesis via de novo pathway; IMP from 5-formamido-1-(5-phospho-D-ribosyl)imidazole-4-carboxamide: step 1/1. The protein is Bifunctional purine biosynthesis protein PurH of Escherichia coli O9:H4 (strain HS).